The following is a 291-amino-acid chain: Pyridoxal kinase PdxY (291 aa).

Residues Ser9 and 44–45 (TQ) each bind substrate. Residues Asp112, Val144, Glu149, Lys182, and 207 to 210 (RPHL) contribute to the ATP site. Asp221 is a substrate binding site.

Belongs to the pyridoxine kinase family. PdxY subfamily. In terms of assembly, homodimer. Requires Mg(2+) as cofactor.

The catalysed reaction is pyridoxal + ATP = pyridoxal 5'-phosphate + ADP + H(+). The protein operates within cofactor metabolism; pyridoxal 5'-phosphate salvage; pyridoxal 5'-phosphate from pyridoxal: step 1/1. In terms of biological role, pyridoxal kinase involved in the salvage pathway of pyridoxal 5'-phosphate (PLP). Catalyzes the phosphorylation of pyridoxal to PLP. This Photobacterium profundum (strain SS9) protein is Pyridoxal kinase PdxY.